A 236-amino-acid chain; its full sequence is Phosphoglycolate phosphatase (236 aa).

Residue Asp23 is the Nucleophile of the active site. The Mg(2+) site is built by Asp23 and Asp25. Lys162 serves as a coordination point for substrate. Mg(2+) is bound by residues Asp185 and Asp189.

The protein belongs to the archaeal SPP-like hydrolase family. Mg(2+) serves as cofactor.

It carries out the reaction 2-phosphoglycolate + H2O = glycolate + phosphate. Its function is as follows. Catalyzes the dephosphorylation of 2-phosphoglycolate. This is Phosphoglycolate phosphatase from Picrophilus torridus (strain ATCC 700027 / DSM 9790 / JCM 10055 / NBRC 100828 / KAW 2/3).